The sequence spans 1050 residues: Ankyrin repeat domain-containing protein 27 (1050 aa).

Positions 1 to 372 (MALYDEDLLK…RQGSLSAKPP (372 aa)) are sufficient for GEF activity towards RAB21. One can recognise a VPS9 domain in the interval 233 to 371 (ASEDAAFNKI…IRQGSLSAKP (139 aa)). ANK repeat units follow at residues 396–426 (SPTD…DKDT), 462–491 (RGHT…MVNA), 495–524 (HGAT…SAEV), 528–560 (NGNT…RLDI), 564–593 (KGDT…STEI), and 597–627 (LKET…RQKS). The segment at 396 to 460 (SPTDCLFKHI…PSVVTPFSRD (65 aa)) is sufficient for interaction with VPS29. Residues 451–600 (PSVVTPFSRD…TEIQNRLKET (150 aa)) form an interaction with RAB38 region. Residues 451-730 (PSVVTPFSRD…APAQKRLAKV (280 aa)) form an interaction with RAB32 region. The tract at residues 625–665 (QKSSEAPVQSPQRSVDSISQESSTSSFSSMSASSRQEETKK) is disordered. Positions 628 to 637 (SEAPVQSPQR) are enriched in polar residues. Residues 638-658 (SVDSISQESSTSSFSSMSASS) show a composition bias toward low complexity. A required for interaction with VAMP7 region spans residues 658-707 (SRQEETKKDYREVEKLLRAVADGDLEMVRYLLEWTEEDLEDAEDTVSAAD). ANK repeat units follow at residues 668 to 698 (REVE…DLED), 743 to 772 (DGSS…NAGA), 776 to 805 (DQAV…KPNK), 809 to 838 (SGNT…SINA), and 842 to 871 (KGNT…SVQV). The sufficient for interaction with VPS29 stretch occupies residues 692–746 (TEEDLEDAEDTVSAADPEFCHPLCQCPKCAPAQKRLAKVPASGLGVNVTSQDGSS). Phosphoserine occurs at positions 962 and 970. The disordered stretch occupies residues 987 to 1050 (PAQSGSHAAE…TPQEVSASRS (64 aa)). Residues 994-1004 (AAEKGNSDWPE) show a composition bias toward basic and acidic residues. Position 1023 is a phosphothreonine (threonine 1023). The segment covering 1040-1050 (STPQEVSASRS) has biased composition (polar residues).

Interacts with RAB21 (GDP-bound form), VPS29, RAB32 (GTP-bound form), RAB38 (GTP-bound form), VAMP7, KIF5A, KIF5C, GOLGA4. Interacts with low affinity with RAB5. ANKRD27:RAB32 heterodimers can homodimerize to form tetramers. Can interact with RAB38 or RAB32, VPS29 and VAMP7 simultaneously. A decreased interaction with RAB32 seen in the presence of SGSM2.

The protein localises to the early endosome. It is found in the late endosome. It localises to the cytoplasmic vesicle membrane. The protein resides in the lysosome. Its subcellular location is the cell membrane. The protein localises to the melanosome. In terms of biological role, may be a guanine exchange factor (GEF) for Rab21, Rab32 and Rab38 and regulate endosome dynamics. May regulate the participation of VAMP7 in membrane fusion events; in vitro inhibits VAMP7-mediated SNARE complex formation by trapping VAMP7 in a closed, fusogenically inactive conformation. Involved in peripheral melanosomal distribution of TYRP1 in melanocytes; the function, which probably is implicating vesicle-trafficking, includes cooperation with Rab32, Rab38 and VAMP7. Involved in the regulation of neurite growth; the function seems to require its GEF activity, probably towards Rab21, and VAMP7 but not Rab32/38. Proposed to be involved in Golgi sorting of VAMP7 and transport of VAMP7 vesicles to the cell surface; the function seems to implicate kinesin heavy chain isoform 5 proteins, GOLGA4, RAB21 and MACF1. Required for the colocalization of VAMP7 and Rab21, probably on TGN sites. Involved in GLUT1 endosome-to-plasma membrane trafficking; the function is dependent of association with VPS29. Regulates the proper trafficking of melanogenic enzymes TYR, TYRP1 and DCT/TYRP2 to melanosomes in melanocytes. This Homo sapiens (Human) protein is Ankyrin repeat domain-containing protein 27 (ANKRD27).